A 64-amino-acid chain; its full sequence is Sulfur carrier protein ThiS (64 aa).

Glycine 64 is modified (1-thioglycine; alternate). Glycine 64 carries the glycyl adenylate; alternate modification. Residue glycine 64 forms a Glycyl cysteine thioester (Gly-Cys) (interchain with C-192 in TtuC); alternate linkage.

Belongs to the sulfur carrier protein ThiS family. C-terminal thiocarboxylation occurs in 2 steps, it is first acyl-adenylated (-COAMP) by TtuC, then thiocarboxylated (-COSH) by the cysteine desulfurases IscS or SufS.

It participates in cofactor biosynthesis; thiamine diphosphate biosynthesis. In terms of biological role, is the sulfur donor in the synthesis of the thiazole phosphate moiety of thiamine phosphate. The chain is Sulfur carrier protein ThiS from Thermus thermophilus (strain ATCC BAA-163 / DSM 7039 / HB27).